Consider the following 324-residue polypeptide: Beta-ketoacyl-[acyl-carrier-protein] synthase III (324 aa).

Active-site residues include Cys114 and His251. The segment at 252–256 (QANLR) is ACP-binding. Residue Asn281 is part of the active site.

The protein belongs to the thiolase-like superfamily. FabH family. In terms of assembly, homodimer.

The protein localises to the cytoplasm. The catalysed reaction is malonyl-[ACP] + acetyl-CoA + H(+) = 3-oxobutanoyl-[ACP] + CO2 + CoA. It participates in lipid metabolism; fatty acid biosynthesis. Catalyzes the condensation reaction of fatty acid synthesis by the addition to an acyl acceptor of two carbons from malonyl-ACP. Catalyzes the first condensation reaction which initiates fatty acid synthesis and may therefore play a role in governing the total rate of fatty acid production. Possesses both acetoacetyl-ACP synthase and acetyl transacylase activities. Its substrate specificity determines the biosynthesis of branched-chain and/or straight-chain of fatty acids. The polypeptide is Beta-ketoacyl-[acyl-carrier-protein] synthase III (Dinoroseobacter shibae (strain DSM 16493 / NCIMB 14021 / DFL 12)).